A 477-amino-acid chain; its full sequence is Serine/threonine-protein kinase pakC (477 aa).

The 96-residue stretch at serine 13–glutamate 108 folds into the PH domain. The CRIB domain occupies valine 112–aspartate 125. Residues tyrosine 204 to methionine 458 form the Protein kinase domain. ATP is bound by residues isoleucine 210 to valine 218 and lysine 233. The active-site Proton acceptor is aspartate 326.

Belongs to the protein kinase superfamily. STE Ser/Thr protein kinase family. STE20 subfamily. In terms of assembly, interacts with GTP-bound racB. Mg(2+) is required as a cofactor.

The protein localises to the cytoplasm. It localises to the membrane. The enzyme catalyses L-seryl-[protein] + ATP = O-phospho-L-seryl-[protein] + ADP + H(+). It carries out the reaction L-threonyl-[protein] + ATP = O-phospho-L-threonyl-[protein] + ADP + H(+). With respect to regulation, kinase activity is rapidly and transiently increased in response to chemoattractant stimulation. Has role in the regulation of chemotaxis. In Dictyostelium discoideum (Social amoeba), this protein is Serine/threonine-protein kinase pakC (pakC).